Consider the following 207-residue polypeptide: Macrophage immunometabolism regulator (207 aa).

Met1 bears the N-acetylmethionine mark. The interval 1 to 41 (MEVDVNGESRSALTTLPLPVAEASSPGKAEAEKPRCSSTPC) is disordered. 3 positions are modified to phosphoserine: Ser25, Ser140, and Ser167.

This sequence belongs to the UNC119-binding protein family. Interacts with UNC119 and UNC119B; interaction preferentially takes place when UNC119 and UNC119B are unliganded with myristoylated proteins.

The protein resides in the cytoplasm. It is found in the cell projection. The protein localises to the cilium. Its function is as follows. Regulates the macrophage function, by enhancing the resolution of inflammation and wound repair functions mediated by M2 macrophages. The regulation of macrophage function is, due at least in part, to its ability to inhibit glycolysis. May play also a role in trafficking of proteins via its interaction with UNC119 and UNC119B cargo adapters: may help the release of UNC119 and UNC119B cargo or the recycling of UNC119 and UNC119B. May play a role in ciliary membrane localization via its interaction with UNC119B and protein transport into photoreceptor cells. The chain is Macrophage immunometabolism regulator (MACIR) from Bos taurus (Bovine).